The primary structure comprises 415 residues: Multifunctional CCA protein (415 aa).

2 residues coordinate ATP: G8 and R11. CTP-binding residues include G8 and R11. Mg(2+)-binding residues include D21 and D23. The ATP site is built by R91, R143, and R146. CTP contacts are provided by R91, R143, and R146. In terms of domain architecture, HD spans 232-333; sequence TGVHVMMVID…TRLLERCDAL (102 aa).

Belongs to the tRNA nucleotidyltransferase/poly(A) polymerase family. Bacterial CCA-adding enzyme type 1 subfamily. In terms of assembly, monomer. Can also form homodimers and oligomers. It depends on Mg(2+) as a cofactor. Ni(2+) is required as a cofactor.

It carries out the reaction a tRNA precursor + 2 CTP + ATP = a tRNA with a 3' CCA end + 3 diphosphate. The enzyme catalyses a tRNA with a 3' CCA end + 2 CTP + ATP = a tRNA with a 3' CCACCA end + 3 diphosphate. Functionally, catalyzes the addition and repair of the essential 3'-terminal CCA sequence in tRNAs without using a nucleic acid template. Adds these three nucleotides in the order of C, C, and A to the tRNA nucleotide-73, using CTP and ATP as substrates and producing inorganic pyrophosphate. tRNA 3'-terminal CCA addition is required both for tRNA processing and repair. Also involved in tRNA surveillance by mediating tandem CCA addition to generate a CCACCA at the 3' terminus of unstable tRNAs. While stable tRNAs receive only 3'-terminal CCA, unstable tRNAs are marked with CCACCA and rapidly degraded. The sequence is that of Multifunctional CCA protein from Cupriavidus pinatubonensis (strain JMP 134 / LMG 1197) (Cupriavidus necator (strain JMP 134)).